The sequence spans 272 residues: Phosphoglycolate phosphatase (272 aa).

The active-site Nucleophile is Asp-19. The Mg(2+) site is built by Asp-19, Asp-21, and Asp-182.

It belongs to the HAD-like hydrolase superfamily. CbbY/CbbZ/Gph/YieH family. It depends on Mg(2+) as a cofactor.

It catalyses the reaction 2-phosphoglycolate + H2O = glycolate + phosphate. Its pathway is organic acid metabolism; glycolate biosynthesis; glycolate from 2-phosphoglycolate: step 1/1. Its function is as follows. Specifically catalyzes the dephosphorylation of 2-phosphoglycolate. Is involved in the dissimilation of the intracellular 2-phosphoglycolate formed during the DNA repair of 3'-phosphoglycolate ends, a major class of DNA lesions induced by oxidative stress. The protein is Phosphoglycolate phosphatase of Pseudomonas fluorescens (strain ATCC BAA-477 / NRRL B-23932 / Pf-5).